Consider the following 471-residue polypeptide: Trigger factor (471 aa).

Residues Glu169–Leu254 enclose the PPIase FKBP-type domain. The interval Val435–Ala471 is disordered. The span at Lys461 to Ala471 shows a compositional bias: basic and acidic residues.

This sequence belongs to the FKBP-type PPIase family. Tig subfamily.

The protein resides in the cytoplasm. It catalyses the reaction [protein]-peptidylproline (omega=180) = [protein]-peptidylproline (omega=0). In terms of biological role, involved in protein export. Acts as a chaperone by maintaining the newly synthesized protein in an open conformation. Functions as a peptidyl-prolyl cis-trans isomerase. The chain is Trigger factor from Brucella abortus (strain S19).